We begin with the raw amino-acid sequence, 94 residues long: Large ribosomal subunit protein bL27 (94 aa).

The disordered stretch occupies residues 1–25 (MAHKKGTGSTRNGRDSQSKRLGVKR).

The protein belongs to the bacterial ribosomal protein bL27 family.

This Gloeothece citriformis (strain PCC 7424) (Cyanothece sp. (strain PCC 7424)) protein is Large ribosomal subunit protein bL27.